Reading from the N-terminus, the 265-residue chain is 3-methyl-2-oxobutanoate hydroxymethyltransferase (265 aa).

Asp43 and Asp82 together coordinate Mg(2+). 3-methyl-2-oxobutanoate-binding positions include 43-44, Asp82, and Lys111; that span reads DS. Glu113 serves as a coordination point for Mg(2+). Glu180 (proton acceptor) is an active-site residue.

This sequence belongs to the PanB family. As to quaternary structure, homodecamer; pentamer of dimers. Mg(2+) serves as cofactor.

Its subcellular location is the cytoplasm. The catalysed reaction is 3-methyl-2-oxobutanoate + (6R)-5,10-methylene-5,6,7,8-tetrahydrofolate + H2O = 2-dehydropantoate + (6S)-5,6,7,8-tetrahydrofolate. It participates in cofactor biosynthesis; (R)-pantothenate biosynthesis; (R)-pantoate from 3-methyl-2-oxobutanoate: step 1/2. Functionally, catalyzes the reversible reaction in which hydroxymethyl group from 5,10-methylenetetrahydrofolate is transferred onto alpha-ketoisovalerate to form ketopantoate. The polypeptide is 3-methyl-2-oxobutanoate hydroxymethyltransferase (Francisella tularensis subsp. holarctica (strain OSU18)).